Reading from the N-terminus, the 247-residue chain is MSHRDTLFSAPIARLGDWTFDERVAEVFPDMIQRSVPGYSNIISMIGMLAERFVQPGTQVYDLGCSLGAATLSVRRNIHHDNCKIIAIDNSPAMIERCRRHIDAYKAPTPVDVIEGDIRDIAIENASMVVLNFTLQFLEPSERQALLDKIYQGLNPGGALVLSEKFSFEDAKVGELLFNMHHDFKRANGYSELEISQKRSMLENVMLTDSVETHKARLHNAGFEHSELWFQCFNFGSLVALKAEDAA.

S-adenosyl-L-methionine-binding positions include Tyr-39, 64 to 66 (GCS), 89 to 90 (DN), 117 to 118 (DI), Asn-132, and Arg-199.

This sequence belongs to the class I-like SAM-binding methyltransferase superfamily. Cx-SAM synthase family. As to quaternary structure, homodimer.

The enzyme catalyses prephenate + S-adenosyl-L-methionine = carboxy-S-adenosyl-L-methionine + 3-phenylpyruvate + H2O. Catalyzes the conversion of S-adenosyl-L-methionine (SAM) to carboxy-S-adenosyl-L-methionine (Cx-SAM). This Escherichia coli (strain K12 / MC4100 / BW2952) protein is Carboxy-S-adenosyl-L-methionine synthase.